The following is a 451-amino-acid chain: Trigger factor (451 aa).

Residues 171–256 form the PPIase FKBP-type domain; it reads GDRVKVNFKG…ATAIEAPEDK (86 aa).

It belongs to the FKBP-type PPIase family. Tig subfamily.

Its subcellular location is the cytoplasm. It catalyses the reaction [protein]-peptidylproline (omega=180) = [protein]-peptidylproline (omega=0). Involved in protein export. Acts as a chaperone by maintaining the newly synthesized protein in an open conformation. Functions as a peptidyl-prolyl cis-trans isomerase. The protein is Trigger factor of Bradyrhizobium sp. (strain ORS 278).